The chain runs to 217 residues: CXXC-type zinc finger protein 4 (217 aa).

The tract at residues 1-20 (MHRNDSQRLGKPGGAPESLQ) is disordered. The CXXC-type zinc finger occupies 122-163 (AKKKRKRCGVCVPCKRLINCGVCSSCRNRKTGHQICKFRKCE). The Zn(2+) site is built by cysteine 129, cysteine 132, cysteine 135, cysteine 141, cysteine 144, cysteine 147, cysteine 157, and cysteine 162.

The protein localises to the cytoplasm. In terms of biological role, acts as a negative regulator of the Wnt signaling pathway required for anterior neural structure formation. Ectopic expression induces ventralization. Binds preferentially to DNA containing cytidine-phosphate-guanosine (CpG) dinucleotides over CpH (H=A, T, and C), hemimethylated-CpG and hemimethylated-hydroxymethyl-CpG. This chain is CXXC-type zinc finger protein 4 (cxxc4), found in Xenopus laevis (African clawed frog).